Consider the following 260-residue polypeptide: Putative protein phosphatase (260 aa).

The region spanning 9 to 254 (FTGLSKKGPV…DNITAALVNL (246 aa)) is the PPM-type phosphatase domain.

It catalyses the reaction O-phospho-L-seryl-[protein] + H2O = L-seryl-[protein] + phosphate. The catalysed reaction is O-phospho-L-threonyl-[protein] + H2O = L-threonyl-[protein] + phosphate. This chain is Putative protein phosphatase, found in Mycoplasma genitalium (strain ATCC 33530 / DSM 19775 / NCTC 10195 / G37) (Mycoplasmoides genitalium).